A 2327-amino-acid polypeptide reads, in one-letter code: Voltage-dependent N-type calcium channel subunit alpha-1B (2327 aa).

The disordered stretch occupies residues 1 to 37 (MVRFGDELGGRYGGTGGGERARGGGAGGAGGPGQGGL). Residues 1–90 (MVRFGDELGG…DNVVRKYAKR (90 aa)) are Cytoplasmic-facing. Residues 10–37 (GRYGGTGGGERARGGGAGGAGGPGQGGL) show a composition bias toward gly residues. Omega-N-methylarginine is present on arginine 22. Residues 82–359 (NVVRKYAKRI…LVLGVLSGEF (278 aa)) form an I repeat. A helical transmembrane segment spans residues 91-114 (ITEWPPFEYMILATIIANCIVLAL). Topologically, residues 115-131 (EQHLPDGDKTPMSERLD) are extracellular. A helical transmembrane segment spans residues 132-152 (DTEPYFIGIFCFEAGIKIIAL). Residues 153–163 (GFVFHKGSYLR) are Cytoplasmic-facing. A helical transmembrane segment spans residues 164–182 (NGWNVMDFVVVLTGILATA). The Extracellular portion of the chain corresponds to 183–187 (GTDFD). Residues 188–211 (LRTLRAVRVLRPLKLVSGIPSLQV) form a helical membrane-spanning segment. Over 212–221 (VLKSIMKAMV) the chain is Cytoplasmic. The helical transmembrane segment at 222–244 (PLLQIGLLLFFAILMFAIIGLEF) threads the bilayer. At 245–331 (YMGKFHKACF…NTNDAAGNTW (87 aa)) the chain is on the extracellular side. N-linked (GlcNAc...) asparagine glycosylation is present at asparagine 256. A helical membrane pass occupies residues 332 to 356 (NWLYFIPLIIIGSFFMLNLVLGVLS). At 357 to 482 (GEFAKERERV…FFIRRMVKAQ (126 aa)) the chain is on the cytoplasmic side. The tract at residues 379-396 (QQIERELNGYLEWIFKAE) is binding to the beta subunit. Residue serine 411 is modified to Phosphoserine. ATP is bound at residue 451-458 (ASLKSGKT). Residues 468 to 712 (EKMFRFFIRR…VFLAIAVDNL (245 aa)) form an II repeat. The helical transmembrane segment at 483-501 (SFYWVVLCVVALNTLCVAM) threads the bilayer. Residues 502–511 (VHYNQPQRLT) are Extracellular-facing. A helical membrane pass occupies residues 512–534 (TALYFAEFVFLGLFLTEMSLKMY). Over 535–544 (GLGPRSYFRS) the chain is Cytoplasmic. Serine 544 is an a 1,2-diacyl-sn-glycero-3-phospho-(1D-myo-inositol-4,5-bisphosphate) binding site. The chain crosses the membrane as a helical span at residues 545–566 (SFNCFDFGVIVGSIFEVVWAAI). At 567–573 (KPGTSFG) the chain is on the extracellular side. A helical transmembrane segment spans residues 574–586 (ISVLRALRLLRIF). Residues arginine 584 and lysine 587 each coordinate a 1,2-diacyl-sn-glycero-3-phospho-(1D-myo-inositol-4,5-bisphosphate). Over 587–604 (KVTKYWNSLRNLVVSLLN) the chain is Cytoplasmic. Residues 605 to 630 (SMKSIISLLFLLFLFIVVFALLGMQL) traverse the membrane as a helical segment. The Extracellular segment spans residues 631 to 682 (FGGQFNFQDETPTTNFDTFPAAILTVFQILTGEDWNAVMYHGIESQGGVSKG). A helical membrane pass occupies residues 683–709 (MFSSFYFIVLTLFGNYTLLNVFLAIAV). Residues 710-1140 (DNLANAQELT…FCHYIVTMRY (431 aa)) are Cytoplasmic-facing. Phosphoserine occurs at positions 745, 748, and 783. Disordered regions lie at residues 802–1015 (TRHV…KEPH) and 1042–1066 (EQPE…PSTT). Basic and acidic residues-rich tracts occupy residues 805-826 (VRPD…RDGL), 869-885 (EQDR…EERA), 914-924 (GSPEEATEREP), 961-972 (GPREAENNEEPT), and 988-1015 (PERE…KEPH). Residues 1050 to 1066 (QRNVTRMGSQPSDPSTT) show a composition bias toward polar residues. Serine 1058 is subject to Phosphoserine. Residues 1126-1412 (NLLRRFCHYI…IFVALIIITF (287 aa)) form an III repeat. Residues 1141–1159 (FEMVILVVIALSSIALAAE) form a helical membrane-spanning segment. Residues 1160–1167 (DPVRTDSF) are Extracellular-facing. A helical membrane pass occupies residues 1168–1192 (RNNALKYMDYIFTGVFTFEMVIKMI). Over 1193 to 1206 (DLGLLLHPGAYFRD) the chain is Cytoplasmic. A helical membrane pass occupies residues 1207 to 1231 (LWNILDFIVVSGALVAFAFSSFMGG). Over 1232–1237 (SKGKDI) the chain is Extracellular. The chain crosses the membrane as a helical span at residues 1238-1258 (NTIKSLRVLRVLRPLKTIKRL). The Cytoplasmic segment spans residues 1259–1276 (PKLKAVFDCVVNSLKNVL). The chain crosses the membrane as a helical span at residues 1277–1296 (NILIVYMLFMFIFAVIAVQL). At 1297 to 1383 (FKGKFFYCTD…EQGPSPGFRM (87 aa)) the chain is on the extracellular side. The chain crosses the membrane as a helical span at residues 1384-1409 (ELSIFYVVYFVVFPFFFVNIFVALII). At 1410–1464 (ITFQEQGDKVMSECSLEKNERACIDFAISAKPLTRYMPQNKQSFQYKTWTFVVSP) the chain is on the cytoplasmic side. The stretch at 1449–1702 (NKQSFQYKTW…LFVAVIMDNF (254 aa)) is one IV repeat. A helical transmembrane segment spans residues 1465 to 1483 (PFEYFIMAMIALNTVVLMM). The Extracellular segment spans residues 1484–1491 (KFYDAPYE). The helical transmembrane segment at 1492–1516 (YELMLKCLNIVFTSMFSMECILKII) threads the bilayer. Topologically, residues 1517–1526 (AFGVLNYFRD) are cytoplasmic. Residues 1527–1548 (AWNVFDFVTVLGSITDILVTEI) traverse the membrane as a helical segment. Residues 1549-1554 (ANNFIN) are Extracellular-facing. N-linked (GlcNAc...) asparagine glycosylation occurs at asparagine 1554. A helical membrane pass occupies residues 1555 to 1573 (LSFLRLFRAARLIKLLRQG). Residues 1574-1592 (YTIRILLWTFVQSFKALPY) lie on the Cytoplasmic side of the membrane. The chain crosses the membrane as a helical span at residues 1593 to 1612 (VCLLIAMLFFIYAIIGMQVF). Residues 1613 to 1674 (GNIALDDDTS…ANASECGSDF (62 aa)) lie on the Extracellular side of the membrane. N-linked (GlcNAc...) asparagine glycosylation is present at asparagine 1666. Residues 1675 to 1698 (AYFYFVSFIFLCSFLMLNLFVAVI) form a helical membrane-spanning segment. The Cytoplasmic portion of the chain corresponds to 1699 to 2327 (MDNFEYLTRD…YHHPDQDHWC (629 aa)). In terms of domain architecture, EF-hand spans 1715-1750 (HHLDEFIRVWAEYDPAACGRISYNDMFEMLKHMSPP). Ca(2+) contacts are provided by aspartate 1728, arginine 1734, and aspartate 1739. A disordered region spans residues 1972 to 2193 (TLRGPDGEPQ…TPRPSITYKT (222 aa)). Over residues 2039-2053 (SHHHHHRCHRRRDKK) the composition is skewed to basic residues. Serine 2056 is subject to Phosphoserine. Positions 2088–2104 (CRRDRKQERGRSQERRQ) are enriched in basic and acidic residues. Composition is skewed to polar residues over residues 2131–2141 (PSLSSHPTSPT) and 2152–2168 (GSGS…SGAS). Residues serine 2212, serine 2221, and serine 2244 each carry the phosphoserine modification. 2 disordered regions span residues 2230–2249 (EPLS…PYLG) and 2273–2292 (ATNS…TSQS). A compositionally biased stretch (low complexity) spans 2276–2292 (SGRSSRTSYVSSLTSQS).

It belongs to the calcium channel alpha-1 subunit (TC 1.A.1.11) family. CACNA1B subfamily. Multisubunit complex consisting of alpha-1, alpha-2, beta and delta subunits in a 1:1:1:1 ratio. The channel activity is directed by the pore-forming and voltage-sensitive alpha-1 subunit. In many cases, this subunit is sufficient to generate voltage-sensitive calcium channel activity. The auxiliary subunits beta and alpha-2/delta linked by a disulfide bridge regulate the channel activity. Interacts with RIMS1. Interacts with FMR1 (via C-terminus); this interaction induces a decrease in the number of presynaptic functional CACNA1B channels at the cell surface. In terms of processing, phosphorylated in vitro by CaM-kinase II, PKA, PKC and CGPK. In terms of tissue distribution, widespread expression throughout the brain. Highest levels in pyramidal cell layers C1, C2 and C3 of the hippocampus, in the dentate gyrus, in the cortex layers 2 et 4, in the subiculum and the habenula.

Its subcellular location is the membrane. The enzyme catalyses Ca(2+)(in) = Ca(2+)(out). Is specifically blocked by omega-conotoxin GVIA. Is specifically blocked by omega-conotoxin MVIIA (ziconotide). Is insensitive to dihydropyridines (DHP). Functionally, voltage-sensitive calcium channels (VSCC) mediate the entry of calcium ions into excitable cells and are also involved in a variety of calcium-dependent processes, including muscle contraction, hormone or neurotransmitter release, gene expression, cell motility, cell division and cell death. This alpha-1B subunit gives rise to N-type calcium currents. N-type calcium channels belong to the 'high-voltage activated' (HVA) group. They are involved in pain signaling. Calcium channels containing alpha-1B subunit may play a role in directed migration of immature neurons. Mediates Ca(2+) release probability at hippocampal neuronal soma and synaptic terminals. This is Voltage-dependent N-type calcium channel subunit alpha-1B (Cacna1b) from Mus musculus (Mouse).